A 431-amino-acid polypeptide reads, in one-letter code: Nuclear receptor subfamily 1 group I member 2 (431 aa).

2 NR C4-type zinc fingers span residues 38–58 (CRVC…CEGC) and 74–99 (CPFR…LRKC). A DNA-binding region (nuclear receptor) is located at residues 38-104 (CRVCGDKANG…RLRKCLESGM (67 aa)). The Bipartite nuclear localization signal signature appears at 63-89 (RRAMKRNVRLRCPFRKGTCEITRKTRR). A hinge region spans residues 105-142 (KKEMIMSDAAVEQRRALIKRKKREKIEAPPPGGQGLTE). Positions 143 to 430 (EQQALIQELM…LMQELFSSTD (288 aa)) constitute an NR LBD domain. Hyperforin-binding positions include Ser244 and 282 to 285 (ILRF).

Belongs to the nuclear hormone receptor family. NR1 subfamily. In terms of assembly, heterodimer with RXRA. Interacts with NCOA1. Interacts (via domain NR LBD) with CRY1 and CRY2 in a ligand-dependent manner.

The protein localises to the nucleus. In terms of biological role, nuclear receptor that binds and is activated by a variety of endogenous and xenobiotic compounds. Transcription factor that activates the transcription of multiple genes involved in the metabolism and secretion of potentially harmful xenobiotics, endogenous compounds and drugs. Response to specific ligands is species-specific, due to differences in the ligand-binding domain. Activated by naturally occurring steroids, such as pregnenolone and progesterone. Binds to a response element in the promoters of the CYP3A4 and ABCB1/MDR1 genes. This chain is Nuclear receptor subfamily 1 group I member 2 (Nr1i2), found in Rattus norvegicus (Rat).